The chain runs to 142 residues: ATP synthase epsilon chain (142 aa).

It belongs to the ATPase epsilon chain family. As to quaternary structure, F-type ATPases have 2 components, CF(1) - the catalytic core - and CF(0) - the membrane proton channel. CF(1) has five subunits: alpha(3), beta(3), gamma(1), delta(1), epsilon(1). CF(0) has three main subunits: a, b and c.

Its subcellular location is the cell inner membrane. Functionally, produces ATP from ADP in the presence of a proton gradient across the membrane. This is ATP synthase epsilon chain from Histophilus somni (strain 129Pt) (Haemophilus somnus).